Reading from the N-terminus, the 267-residue chain is Lectin SfL-1 (267 aa).

4 repeat units span residues 1-67 (GRYT…RRGD), 68-135 (SNNY…QSGG), 136-202 (DSYN…STGG), and 203-267 (SNYK…GTAI). A 4 X approximate tandem repeats region spans residues 1-267 (GRYTVQNQWG…GPIGFKGTAI (267 aa)).

Monomer.

Its function is as follows. Lectin specific for high mannose N-glycans, recognizes the branched moiety of these glycans. Does not recognize other types of N-glycans or monosaccharides. This Solieria filiformis (Red alga) protein is Lectin SfL-1.